We begin with the raw amino-acid sequence, 939 residues long: MKDKIVIKGAKVHNLKNVDLTVPRNEFVVFTGLSGSGKSSLAFDTLYAEGQRRYMESLSSYARQFLGQMDKPNVEYIEGLSPAISIDQKTTGRNPRSTVGTVTEIYDYLRLLYAKIGVPHCPNCGKEISQQTVDQIVDSVMKLEERTKIQVLAPVVRGRKGEHTKLIAHIKKSGFVRVRIDGEVYEIDEDEIKLDKNKKHHIEALVDRIVIKQGVEGRLTDSVETALKLAEGLVVINVMGKEDMLFSENFACPDCGISIGEISPSMFSFNAPFGKCDVCDGIGTLLEIDEDLVIPDKSKSIMEGAIAPWGEGRLKEESWTFGVLKALSKKYKLDINKPIEDYDEKTLNILLYGAPDVLKVNYVKDSQEMVFNHHYEGIINQMKRRYMESNSDYIKSEIENYMSNNPCPKCKGARLKKEVLAITVGNKNIFEFCSMPIREEVSFIDTLELSNKHKIISAQIVKEIKSRLEFLINVGLDYLNLAREARTLSGGESQRIRLATQIGSSLVGVLYILDEPSIGLHQRDNDRLIATMKNLKDIGNTLIVVEHDEDTIKAADFIVDIGPGAGEHGGEIIAAGSLEDIKNCKESITGQYLTGVKKIEVPKERREAGKNFIEIVGAKENNLKNVNVKFPVGLFTCVTGVSGSGKSTLVNEILYKALNKKINRSKLNPGKYKSINGIENIDKIIDINQSPIGRTPRSNPATYTGVFDIIRELYASTKEAKLRGYKAGRFSFNVKGGRCEACKGDGIVRIEMQFLSDVYVPCDVCKGKRYNRETLEIKYKDKNIDDLLNMTVEDALKFFENLPRIKNKLQTLADVGLGYVRLGQPSTQLSGGEAQRIKLAYELSKRSTGKTLYILDEPTTGLHTDDVKKLISILQRLTDMGNTVVVIEHNLDVIKCADYIVDLGPEGGEKGGTILCSGTPEQVAQNSSSYTGQYLKKML.

Position 32-39 (glycine 32–serine 39) interacts with ATP. The C4-type zinc finger occupies cysteine 252–cysteine 279. 2 ABC transporter domains span residues tryptophan 309–isoleucine 588 and alanine 608–lysine 936. Glycine 640–serine 647 serves as a coordination point for ATP. A C4-type zinc finger spans residues cysteine 739 to cysteine 765.

Belongs to the ABC transporter superfamily. UvrA family. Forms a heterotetramer with UvrB during the search for lesions.

The protein localises to the cytoplasm. In terms of biological role, the UvrABC repair system catalyzes the recognition and processing of DNA lesions. UvrA is an ATPase and a DNA-binding protein. A damage recognition complex composed of 2 UvrA and 2 UvrB subunits scans DNA for abnormalities. When the presence of a lesion has been verified by UvrB, the UvrA molecules dissociate. This Clostridium acetobutylicum (strain ATCC 824 / DSM 792 / JCM 1419 / IAM 19013 / LMG 5710 / NBRC 13948 / NRRL B-527 / VKM B-1787 / 2291 / W) protein is UvrABC system protein A.